We begin with the raw amino-acid sequence, 235 residues long: MHIAEGVLPPVQCAIWFAAAAPFVVHGAVQVVKQIKHHPENRLLLATAGACTFLLSSIKLPSVTGSSSHPTGTGVGAVLFKPPVMAFMGLIVLIFQALLLAHGGITTLGANTFSMAIVGPWVGYGAYVLNKKLGGPLALGIFLAMFLSDLSTYCVTSFQLAFAYPDPSSGVLGAAEKFLGIFAISQIPLSVAEGILGILLFRFLFKVAGPQLQALGVRIGNKRTANAEVPEVAHV.

The next 6 membrane-spanning stretches (helical) occupy residues 6-26 (GVLPPVQCAIWFAAAAPFVVH), 43-63 (LLLATAGACTFLLSSIKLPSV), 85-105 (MAFMGLIVLIFQALLLAHGGI), 108-128 (LGANTFSMAIVGPWVGYGAYV), 133-153 (LGGPLALGIFLAMFLSDLSTY), and 181-201 (IFAISQIPLSVAEGILGILLF).

The protein belongs to the CbiM family. In terms of assembly, forms an energy-coupling factor (ECF) transporter complex composed of an ATP-binding protein (A component, CbiO), a transmembrane protein (T component, CbiQ) and 2 possible substrate-capture proteins (S components, CbiM and CbiN) of unknown stoichimetry.

It is found in the cell membrane. Its pathway is cofactor biosynthesis; adenosylcobalamin biosynthesis. Functionally, part of the energy-coupling factor (ECF) transporter complex CbiMNOQ involved in cobalt import. The polypeptide is Cobalt transport protein CbiM (Propionibacterium freudenreichii subsp. shermanii (strain ATCC 9614 / DSM 4902 / CIP 103027 / NCIMB 8099 / CIRM-BIA1)).